Consider the following 260-residue polypeptide: 2-oxo-tetronate isomerase (260 aa).

Glutamate 143 (proton donor/acceptor) is an active-site residue. The Mg(2+) site is built by glutamate 143, aspartate 178, glutamine 204, and glutamate 240. Catalysis depends on glutamate 240, which acts as the Proton donor/acceptor.

This sequence belongs to the hyi family. OtnI subfamily.

It catalyses the reaction 2-dehydro-L-erythronate = 3-dehydro-L-erythronate. The catalysed reaction is 2-dehydro-D-erythronate = 3-dehydro-D-erythronate. In terms of biological role, catalyzes the isomerization of 2-oxo-tetronate to 3-oxo-tetronate. In Cupriavidus necator (strain ATCC 17699 / DSM 428 / KCTC 22496 / NCIMB 10442 / H16 / Stanier 337) (Ralstonia eutropha), this protein is 2-oxo-tetronate isomerase.